The chain runs to 678 residues: Probable antibacterial peptide polyprotein (678 aa).

A run of 14 repeats spans residues 1-67 (MRSP…PEVR), 68-114 (ERRS…PEVR), 115-161 (ERRS…PEVR), 162-208 (ERRS…PEVR), 209-255 (ERRS…PEVR), 256-302 (ERGS…PEVR), 303-349 (ERRS…PEVR), 350-396 (ERRS…PEVR), 397-443 (ERRS…PEVR), 444-490 (ERRS…PEVR), 491-537 (ERRS…PEVR), 538-584 (ERRS…PEVR), 585-631 (ERRS…PEVR), and 632-678 (ERRS…PEVR). The interval 1 to 678 (MRSPRVIHLA…SEGVVLPEVR (678 aa)) is 14 X approximate tandem repeats. The O-linked (GalNAc...) threonine glycan is linked to T32. 2 disordered regions span residues 58–97 (SEAELLPEVRERRSPVDKGGYLPRPTPPRPVYRSRRDASL) and 113–678 (VRER…PEVR). Residues 64-73 (PEVRERRSPV) are compositionally biased toward basic and acidic residues. O-linked (GalNAc...) threonine glycans are attached at residues T83 and T130. The segment covering 145–157 (ESELSPLSEAEVL) has biased composition (low complexity). Basic and acidic residues predominate over residues 158–167 (PEVRERRSPV). O-linked (GalNAc...) threonine glycosylation is present at T177. Positions 188-204 (VASLESELSPLSEAEVL) are enriched in low complexity. A compositionally biased stretch (basic and acidic residues) spans 205 to 214 (PEVRERRSPV). 2 O-linked (GalNAc...) threonine glycosylation sites follow: T224 and T271. The segment covering 299-308 (PEVRERRSPV) has biased composition (basic and acidic residues). Residue T318 is glycosylated (O-linked (GalNAc...) threonine). Residues 333 to 345 (ESELSPLSEAEVL) show a composition bias toward low complexity. Basic and acidic residues predominate over residues 346 to 355 (PEVRERRSPV). An O-linked (GalNAc...) threonine glycan is attached at T365. The segment covering 380-392 (ESELSPLSEAEVL) has biased composition (low complexity). The segment covering 393–402 (PEVRERRSPV) has biased composition (basic and acidic residues). T412 is a glycosylation site (O-linked (GalNAc...) threonine). The segment covering 427 to 439 (ESELSPLSEAEVL) has biased composition (low complexity). A compositionally biased stretch (basic and acidic residues) spans 440-449 (PEVRERRSPV). A glycan (O-linked (GalNAc...) threonine) is linked at T459. Low complexity predominate over residues 474–486 (ESELSPLSEAEVL). The segment covering 487 to 496 (PEVRERRSPV) has biased composition (basic and acidic residues). An O-linked (GalNAc...) threonine glycan is attached at T506. Over residues 521 to 533 (ESELSPSSEAEVL) the composition is skewed to low complexity. Positions 534 to 543 (PEVRERRSPV) are enriched in basic and acidic residues. A glycan (O-linked (GalNAc...) threonine) is linked at T553. Over residues 568–580 (ESELSPLSEAEVL) the composition is skewed to low complexity. Positions 581-590 (PEVRERRSPV) are enriched in basic and acidic residues. O-linked (GalNAc...) threonine glycosylation is present at T600. Over residues 615–627 (ESELSPLSEAEGL) the composition is skewed to low complexity. T647 is a glycosylation site (O-linked (GalNAc...) threonine).

It localises to the secreted. Has antibacterial activity in vitro. The sequence is that of Probable antibacterial peptide polyprotein from Riptortus clavatus (Bean bug).